The sequence spans 520 residues: MAKITSLIGSGIVAATNQVGPHVKHIPAVGNLQKQIVSDQIQVRWSSTETSLKNDISATDVRGYKGHDMLAPFTAGWHSTDLEPLVIQKSEGSYVYDVNGKKYLDALAGLWCTSLGGNEPRLVAAATKQLNELAFYHSFWNRSTKPSLDLAKELLDLFTANKMAKAFFTNSGSEANDTQVKLVWYYNNALGRPDKKKFIARTKSYHGSTLISASLSGLPALHQQFDLPAPFVLHTDCPHFWRFHQPGETEEEFSTRLANNLENLILKEGPETIAAFIAEPVMGAGGVIPPPATYFEKVQAILKKYDILFIADEVICGFGRLGTMFGCEKYNIKPDLVSVAKALSSGYMPIGAVLVSPEVSDVIYSQSNKLGTFSHGFTYSGHPVSCAVALETLKIYKERNIIEQVNRISPKFQEGLKAFSDSPIIGEIRGTGLLHGTEFTDNKSPNDPFPPEWGIGAYFGARCEKHGVLVRVAGDNIMMSPPYILSLEEIDELIIKYGKALKDTENRVEELKSQKKIKSS.

A chloroplast-targeting transit peptide spans 1-44 (MAKITSLIGSGIVAATNQVGPHVKHIPAVGNLQKQIVSDQIQVR). 172 to 173 (GS) lines the pyridoxal 5'-phosphate pocket. Residue Tyr205 coordinates substrate. Asp312 lines the pyridoxal 5'-phosphate pocket. Substrate is bound at residue Lys341. Lys341 is modified (N6-(pyridoxal phosphate)lysine).

This sequence belongs to the class-III pyridoxal-phosphate-dependent aminotransferase family. As to expression, expressed in leaves, roots, stems, flowers and fruits.

It is found in the plastid. Its subcellular location is the chloroplast. The catalysed reaction is 4-aminobutanoate + pyruvate = succinate semialdehyde + L-alanine. It carries out the reaction 4-aminobutanoate + glyoxylate = succinate semialdehyde + glycine. Its function is as follows. Transaminase that degrades gamma-amino butyric acid (GABA) and uses pyruvate or glyoxylate as amino-group acceptor. Cannot use beta-alanine, ornithine, acetylornithine, serine, glycine, asparagine, glutamine, glutamate, valine, leucine, isoleucine, methionine, phenylalanine, histidine, lysine, arginine, aspartate, threonine, tyrosine, tryptophan, proline, or cysteine as amino donors. The polypeptide is Gamma aminobutyrate transaminase 3, chloroplastic (GABA-TP3) (Solanum lycopersicum (Tomato)).